Consider the following 261-residue polypeptide: tRNA pseudouridine synthase A (261 aa).

The active-site Nucleophile is the aspartate 51. Tyrosine 109 is a substrate binding site.

The protein belongs to the tRNA pseudouridine synthase TruA family. Homodimer.

The catalysed reaction is uridine(38/39/40) in tRNA = pseudouridine(38/39/40) in tRNA. Functionally, formation of pseudouridine at positions 38, 39 and 40 in the anticodon stem and loop of transfer RNAs. This Shewanella woodyi (strain ATCC 51908 / MS32) protein is tRNA pseudouridine synthase A.